We begin with the raw amino-acid sequence, 627 residues long: tRNA uridine 5-carboxymethylaminomethyl modification enzyme MnmG (627 aa).

FAD contacts are provided by residues 13–18, valine 125, and serine 180; that span reads GGGHAG. 274 to 288 serves as a coordination point for NAD(+); the sequence is GPRYCPSIEDKVVRF. Glutamine 371 is an FAD binding site.

It belongs to the MnmG family. As to quaternary structure, homodimer. Heterotetramer of two MnmE and two MnmG subunits. The cofactor is FAD.

The protein localises to the cytoplasm. NAD-binding protein involved in the addition of a carboxymethylaminomethyl (cmnm) group at the wobble position (U34) of certain tRNAs, forming tRNA-cmnm(5)s(2)U34. In Francisella tularensis subsp. tularensis (strain WY96-3418), this protein is tRNA uridine 5-carboxymethylaminomethyl modification enzyme MnmG.